The following is a 69-amino-acid chain: DNA gyrase inhibitor YacG (69 aa).

Zn(2+) is bound by residues cysteine 7, cysteine 10, cysteine 26, and cysteine 30.

Belongs to the DNA gyrase inhibitor YacG family. Interacts with GyrB. Requires Zn(2+) as cofactor.

In terms of biological role, inhibits all the catalytic activities of DNA gyrase by preventing its interaction with DNA. Acts by binding directly to the C-terminal domain of GyrB, which probably disrupts DNA binding by the gyrase. This is DNA gyrase inhibitor YacG from Shewanella sp. (strain ANA-3).